A 276-amino-acid chain; its full sequence is Diaminopimelate epimerase (276 aa).

3 residues coordinate substrate: Asn-13, Gln-46, and Asn-66. Cys-75 acts as the Proton donor in catalysis. Substrate-binding positions include 76-77 (GN), Asn-159, Asn-192, and 210-211 (ER). The active-site Proton acceptor is Cys-219. 220–221 (GT) is a binding site for substrate.

This sequence belongs to the diaminopimelate epimerase family. Homodimer.

It localises to the cytoplasm. The catalysed reaction is (2S,6S)-2,6-diaminopimelate = meso-2,6-diaminopimelate. It participates in amino-acid biosynthesis; L-lysine biosynthesis via DAP pathway; DL-2,6-diaminopimelate from LL-2,6-diaminopimelate: step 1/1. Catalyzes the stereoinversion of LL-2,6-diaminopimelate (L,L-DAP) to meso-diaminopimelate (meso-DAP), a precursor of L-lysine and an essential component of the bacterial peptidoglycan. This chain is Diaminopimelate epimerase, found in Teredinibacter turnerae (strain ATCC 39867 / T7901).